The sequence spans 339 residues: Nicotinate-nucleotide--dimethylbenzimidazole phosphoribosyltransferase (339 aa).

The active-site Proton acceptor is the Glu306.

This sequence belongs to the CobT family.

It catalyses the reaction 5,6-dimethylbenzimidazole + nicotinate beta-D-ribonucleotide = alpha-ribazole 5'-phosphate + nicotinate + H(+). Its pathway is nucleoside biosynthesis; alpha-ribazole biosynthesis; alpha-ribazole from 5,6-dimethylbenzimidazole: step 1/2. Its function is as follows. Catalyzes the synthesis of alpha-ribazole-5'-phosphate from nicotinate mononucleotide (NAMN) and 5,6-dimethylbenzimidazole (DMB). The polypeptide is Nicotinate-nucleotide--dimethylbenzimidazole phosphoribosyltransferase (Brucella anthropi (strain ATCC 49188 / DSM 6882 / CCUG 24695 / JCM 21032 / LMG 3331 / NBRC 15819 / NCTC 12168 / Alc 37) (Ochrobactrum anthropi)).